Reading from the N-terminus, the 344-residue chain is tRNA N6-adenosine threonylcarbamoyltransferase (344 aa).

His-115 and His-119 together coordinate Fe cation. Substrate-binding positions include 137–141 (LVSGG), Asp-170, Gly-183, Asp-187, and Asn-276. Fe cation is bound at residue Asp-306.

The protein belongs to the KAE1 / TsaD family. Requires Fe(2+) as cofactor.

Its subcellular location is the cytoplasm. The catalysed reaction is L-threonylcarbamoyladenylate + adenosine(37) in tRNA = N(6)-L-threonylcarbamoyladenosine(37) in tRNA + AMP + H(+). In terms of biological role, required for the formation of a threonylcarbamoyl group on adenosine at position 37 (t(6)A37) in tRNAs that read codons beginning with adenine. Is involved in the transfer of the threonylcarbamoyl moiety of threonylcarbamoyl-AMP (TC-AMP) to the N6 group of A37, together with TsaE and TsaB. TsaD likely plays a direct catalytic role in this reaction. The protein is tRNA N6-adenosine threonylcarbamoyltransferase of Limosilactobacillus fermentum (strain NBRC 3956 / LMG 18251) (Lactobacillus fermentum).